Reading from the N-terminus, the 86-residue chain is Large ribosomal subunit protein bL27 (86 aa).

Positions 1 to 23 are disordered; it reads MAHKKAGGSTRNGRDSESKRLGV.

Belongs to the bacterial ribosomal protein bL27 family.

This chain is Large ribosomal subunit protein bL27, found in Alkalilimnicola ehrlichii (strain ATCC BAA-1101 / DSM 17681 / MLHE-1).